The sequence spans 121 residues: Small ribosomal subunit protein uS13 (121 aa).

A disordered region spans residues 90 to 121 (RHRRGLPVRGQHTKNNARTRKGKKVSIAGRKK).

The protein belongs to the universal ribosomal protein uS13 family. As to quaternary structure, part of the 30S ribosomal subunit. Forms a loose heterodimer with protein S19. Forms two bridges to the 50S subunit in the 70S ribosome.

Functionally, located at the top of the head of the 30S subunit, it contacts several helices of the 16S rRNA. In the 70S ribosome it contacts the 23S rRNA (bridge B1a) and protein L5 of the 50S subunit (bridge B1b), connecting the 2 subunits; these bridges are implicated in subunit movement. Contacts the tRNAs in the A and P-sites. The protein is Small ribosomal subunit protein uS13 of Lactiplantibacillus plantarum (strain ATCC BAA-793 / NCIMB 8826 / WCFS1) (Lactobacillus plantarum).